A 192-amino-acid chain; its full sequence is Phosphoheptose isomerase (192 aa).

In terms of domain architecture, SIS spans 35 to 192 (LIETLENQGK…CIERHFANKN (158 aa)). 50–52 (NGG) lines the substrate pocket. Zn(2+) is bound by residues H59 and E63. Residues E63, 92–93 (ND), 118–120 (STS), S123, and Q170 contribute to the substrate site. Residues Q170 and H178 each contribute to the Zn(2+) site.

It belongs to the SIS family. GmhA subfamily. Homotetramer. It depends on Zn(2+) as a cofactor.

Its subcellular location is the cytoplasm. The catalysed reaction is 2 D-sedoheptulose 7-phosphate = D-glycero-alpha-D-manno-heptose 7-phosphate + D-glycero-beta-D-manno-heptose 7-phosphate. It functions in the pathway carbohydrate biosynthesis; D-glycero-D-manno-heptose 7-phosphate biosynthesis; D-glycero-alpha-D-manno-heptose 7-phosphate and D-glycero-beta-D-manno-heptose 7-phosphate from sedoheptulose 7-phosphate: step 1/1. Functionally, catalyzes the isomerization of sedoheptulose 7-phosphate in D-glycero-D-manno-heptose 7-phosphate. This is Phosphoheptose isomerase from Helicobacter pylori (strain Shi470).